The primary structure comprises 272 residues: Putative phosphoenolpyruvate synthase regulatory protein (272 aa).

152 to 159 (GVSRCGKT) is a binding site for ADP.

This sequence belongs to the pyruvate, phosphate/water dikinase regulatory protein family. PSRP subfamily.

The enzyme catalyses [pyruvate, water dikinase] + ADP = [pyruvate, water dikinase]-phosphate + AMP + H(+). It catalyses the reaction [pyruvate, water dikinase]-phosphate + phosphate + H(+) = [pyruvate, water dikinase] + diphosphate. In terms of biological role, bifunctional serine/threonine kinase and phosphorylase involved in the regulation of the phosphoenolpyruvate synthase (PEPS) by catalyzing its phosphorylation/dephosphorylation. In Ectopseudomonas mendocina (strain ymp) (Pseudomonas mendocina), this protein is Putative phosphoenolpyruvate synthase regulatory protein.